A 165-amino-acid polypeptide reads, in one-letter code: Copper-resistant cuproprotein CopI (165 aa).

An N-terminal signal peptide occupies residues 1 to 23; it reads MKNRILRPALLCVAALFATTAQA. Positions 25–42 are enriched in basic and acidic residues; sequence AGHDHGSAHAGAHAHDAD. The tract at residues 25-50 is disordered; the sequence is AGHDHGSAHAGAHAHDADTPYGRPGD. Cu(2+) contacts are provided by histidine 93, cysteine 148, histidine 153, and methionine 158.

It belongs to the CopI family. Monomer.

The protein localises to the periplasm. Functionally, involved in copper tolerance. Required for copper resistance under both aerobic and anaerobic photosynthetic growth conditions. Binds copper. Could be an important defense against copper in the periplasm and may protect not only c type cytochromes but also other proteins with cysteine residues from copper ions that may catalyze nonnative disulfide bond formation. The sequence is that of Copper-resistant cuproprotein CopI from Rubrivivax gelatinosus (Rhodocyclus gelatinosus).